The chain runs to 426 residues: MTEFDLHAYMTRVGQQARAASRAMARASTADKNRALLTIAAAIRRDADKLKAVNARDVERARTNGQDAAFIDRLTLSDKAIATMAAGLEQIAALADPIGEISNMKFRPTGIQVGQMRVPLGVIGIIYESRPNVTIDAAALCLKSGNSTILRGGSEAIESNTALAALVAEGLAAAGLPSEAVQVIETTDRAAVGRLITMTEYVDVIVPRGGKSLIARLMEEARVPMIKHLDGICHVYIDDDADLEKAVRVCDNAKTQRYAPCNTMETLLVSREIAAKALPPLCRIYQEKGVELRVCPATRATLEAAGFSGLVDATEEDWRLEYLAPVLAIRTVDGLDAAIAHINTYGSAHTDSIITENYTTGMRFLREVDSASVMINASTRFADGFEYGLGAEIGISNDKLHARGPVGLEGLTSLKYVVFGHGEIRT.

This sequence belongs to the gamma-glutamyl phosphate reductase family.

The protein resides in the cytoplasm. It carries out the reaction L-glutamate 5-semialdehyde + phosphate + NADP(+) = L-glutamyl 5-phosphate + NADPH + H(+). The protein operates within amino-acid biosynthesis; L-proline biosynthesis; L-glutamate 5-semialdehyde from L-glutamate: step 2/2. In terms of biological role, catalyzes the NADPH-dependent reduction of L-glutamate 5-phosphate into L-glutamate 5-semialdehyde and phosphate. The product spontaneously undergoes cyclization to form 1-pyrroline-5-carboxylate. The chain is Gamma-glutamyl phosphate reductase from Cupriavidus metallidurans (strain ATCC 43123 / DSM 2839 / NBRC 102507 / CH34) (Ralstonia metallidurans).